Here is a 299-residue protein sequence, read N- to C-terminus: Transcription factor BHLH148 (299 aa).

The segment at 90 to 127 (RMGGGGGGGEKGEGEEMEEEEEVPQRRRRGQGADVESS) is disordered. The span at 102–111 (EGEEMEEEEE) shows a compositional bias: acidic residues. A basic motif; degenerate region spans residues 127-140 (SRGFRHMMRERQRR). The bHLH domain occupies 127–176 (SRGFRHMMRERQRREKLSQSYADLYAMVSSRSKGDKNSIVQSAAIYIHEL). The tract at residues 141-176 (EKLSQSYADLYAMVSSRSKGDKNSIVQSAAIYIHEL) is helix-loop-helix motif. The tract at residues 273 to 299 (ERNQPDSDAPFPGSKGWTQTSHVQNVF) is disordered. Polar residues predominate over residues 288-299 (GWTQTSHVQNVF).

This sequence belongs to the bHLH protein family. As to quaternary structure, interacts with TIFY10A/JAZ6, TIFY10B/JAZ7, TIFY11A/JAZ9, TIFY11C/JAZ11, and TIFY11D/JAZ12.

It is found in the nucleus. Its function is as follows. May act on an initial response of jasmonate-regulated gene expression toward drought tolerance as part of a BHLH148-TIFY11D/JAZ12-COI1A complex. The sequence is that of Transcription factor BHLH148 from Oryza sativa subsp. japonica (Rice).